A 243-amino-acid polypeptide reads, in one-letter code: Small ribosomal subunit protein uS2 (243 aa).

It belongs to the universal ribosomal protein uS2 family.

In Chromobacterium violaceum (strain ATCC 12472 / DSM 30191 / JCM 1249 / CCUG 213 / NBRC 12614 / NCIMB 9131 / NCTC 9757 / MK), this protein is Small ribosomal subunit protein uS2.